The following is an 807-amino-acid chain: Zinc finger protein 594 (807 aa).

Positions 1–23 (MKEWKSKMEISEEKKSARAASEK) are disordered. C2H2-type zinc fingers lie at residues 127 to 149 (YECK…QRIH), 155 to 177 (YVCN…QRIH), 183 to 205 (YICH…KQIH), 211 to 233 (YECK…QRIH), 239 to 261 (YLCN…HRIH), 267 to 289 (YECY…QRIH), 295 to 317 (LKCN…QRLH), and 323 to 345 (YECH…QRLH). The segment at 348 to 370 (EKIEECEKTFSKDEELREEQRIH) adopts a C2H2-type 9; degenerate zinc-finger fold. 6 consecutive C2H2-type zinc fingers follow at residues 376–398 (YWCN…QVTH), 404–426 (YECK…HRIH), 432–454 (CVCS…HRVH), 460–482 (YECS…QKIH), 488–510 (YQCT…RRIH), and 516–538 (YECK…QSLH). Residues 543–562 (LECEKTFSQDEELRGEQKIH) form a C2H2-type 16; degenerate zinc finger. 6 C2H2-type zinc fingers span residues 568–590 (YWCN…QVTH), 596–618 (YECK…HRIH), 624–646 (YVCN…HRIH), 652–674 (YECS…QKIH), 680–702 (YQCS…RRLH), and 708–730 (YECK…QRLH). The segment at 733–755 (EKLEECEKTFSKDEELRKEQRTH) adopts a C2H2-type 23; degenerate zinc-finger fold. The segment at 761 to 783 (YWCNQCSRTFQGSSDLIRHQVTH) adopts a C2H2-type 24 zinc-finger fold.

The protein belongs to the krueppel C2H2-type zinc-finger protein family.

Its subcellular location is the nucleus. Its function is as follows. May be involved in transcriptional regulation. The protein is Zinc finger protein 594 (ZNF594) of Homo sapiens (Human).